The following is a 139-amino-acid chain: Nucleoside diphosphate kinase (139 aa).

Lys-10, Phe-58, Arg-86, Thr-92, Arg-104, and Asn-114 together coordinate ATP. The active-site Pros-phosphohistidine intermediate is His-117.

It belongs to the NDK family. In terms of assembly, homotetramer. Requires Mg(2+) as cofactor.

It is found in the cytoplasm. It catalyses the reaction a 2'-deoxyribonucleoside 5'-diphosphate + ATP = a 2'-deoxyribonucleoside 5'-triphosphate + ADP. The catalysed reaction is a ribonucleoside 5'-diphosphate + ATP = a ribonucleoside 5'-triphosphate + ADP. Its function is as follows. Major role in the synthesis of nucleoside triphosphates other than ATP. The ATP gamma phosphate is transferred to the NDP beta phosphate via a ping-pong mechanism, using a phosphorylated active-site intermediate. The protein is Nucleoside diphosphate kinase of Rhodococcus opacus (strain B4).